A 428-amino-acid polypeptide reads, in one-letter code: Glutamyl-tRNA reductase (428 aa).

Residues 49–52 (TCNR), S109, 114–116 (EGQ), and Q120 contribute to the substrate site. The Nucleophile role is filled by C50. 189–194 (GAGKMA) is an NADP(+) binding site.

Belongs to the glutamyl-tRNA reductase family. As to quaternary structure, homodimer.

It catalyses the reaction (S)-4-amino-5-oxopentanoate + tRNA(Glu) + NADP(+) = L-glutamyl-tRNA(Glu) + NADPH + H(+). It participates in porphyrin-containing compound metabolism; protoporphyrin-IX biosynthesis; 5-aminolevulinate from L-glutamyl-tRNA(Glu): step 1/2. It functions in the pathway porphyrin-containing compound metabolism; chlorophyll biosynthesis. Its function is as follows. Catalyzes the NADPH-dependent reduction of glutamyl-tRNA(Glu) to glutamate 1-semialdehyde (GSA). This is Glutamyl-tRNA reductase from Rippkaea orientalis (strain PCC 8801 / RF-1) (Cyanothece sp. (strain PCC 8801)).